Consider the following 322-residue polypeptide: Putative HTH-type transcriptional regulatory protein rrnAC2519 (322 aa).

In terms of domain architecture, HTH cro/C1-type spans 132 to 189 (LADVREDRDWSLGRLAKELGVSRRTVSKYEDGMDASVEVAAELEDLFDAPLTSPVSVL). Positions 143 to 162 (LGRLAKELGVSRRTVSKYED) form a DNA-binding region, H-T-H motif.

This Haloarcula marismortui (strain ATCC 43049 / DSM 3752 / JCM 8966 / VKM B-1809) (Halobacterium marismortui) protein is Putative HTH-type transcriptional regulatory protein rrnAC2519.